A 213-amino-acid chain; its full sequence is Orotate phosphoribosyltransferase (213 aa).

Lysine 26 is a binding site for 5-phospho-alpha-D-ribose 1-diphosphate. 34–35 (FF) contributes to the orotate binding site. 5-phospho-alpha-D-ribose 1-diphosphate is bound by residues 72–73 (YK), arginine 99, lysine 100, lysine 103, histidine 105, and 124–132 (DDVITAGTA). 2 residues coordinate orotate: threonine 128 and arginine 156.

Belongs to the purine/pyrimidine phosphoribosyltransferase family. PyrE subfamily. Homodimer. The cofactor is Mg(2+).

The catalysed reaction is orotidine 5'-phosphate + diphosphate = orotate + 5-phospho-alpha-D-ribose 1-diphosphate. It functions in the pathway pyrimidine metabolism; UMP biosynthesis via de novo pathway; UMP from orotate: step 1/2. In terms of biological role, catalyzes the transfer of a ribosyl phosphate group from 5-phosphoribose 1-diphosphate to orotate, leading to the formation of orotidine monophosphate (OMP). This Pseudomonas savastanoi pv. phaseolicola (strain 1448A / Race 6) (Pseudomonas syringae pv. phaseolicola (strain 1448A / Race 6)) protein is Orotate phosphoribosyltransferase.